An 86-amino-acid polypeptide reads, in one-letter code: Omega-theraphotoxin-Hhn1f 4 (86 aa).

The first 21 residues, 1–21, serve as a signal peptide directing secretion; sequence MKSIVFVALFGLALLAVVCSA. The propeptide occupies 22 to 50; it reads SEDAHKELLKEVVRAMVVDKTDAVQAGER. 3 disulfide bridges follow: C52-C66, C59-C71, and C65-C78.

This sequence belongs to the neurotoxin 10 (Hwtx-1) family. 17 (Hntx-9) subfamily. As to expression, expressed by the venom gland.

It localises to the secreted. Its function is as follows. Ion channel inhibitor. In Cyriopagopus hainanus (Chinese bird spider), this protein is Omega-theraphotoxin-Hhn1f 4.